Here is a 352-residue protein sequence, read N- to C-terminus: Holliday junction branch migration complex subunit RuvB (352 aa).

The interval 1-182 (MRIELLNTPP…FGINSRFDYY (182 aa)) is large ATPase domain (RuvB-L). ATP contacts are provided by residues isoleucine 21, arginine 22, glycine 63, lysine 66, threonine 67, threonine 68, 129-131 (EDF), arginine 172, tyrosine 182, and arginine 219. Threonine 67 contributes to the Mg(2+) binding site. The tract at residues 183 to 253 (EPELLTRIII…IAMKTLECLE (71 aa)) is small ATPAse domain (RuvB-S). A head domain (RuvB-H) region spans residues 256 to 352 (EEGLDEMDKK…LPLFDESEAD (97 aa)). 3 residues coordinate DNA: arginine 292, arginine 311, and arginine 316.

It belongs to the RuvB family. Homohexamer. Forms an RuvA(8)-RuvB(12)-Holliday junction (HJ) complex. HJ DNA is sandwiched between 2 RuvA tetramers; dsDNA enters through RuvA and exits via RuvB. An RuvB hexamer assembles on each DNA strand where it exits the tetramer. Each RuvB hexamer is contacted by two RuvA subunits (via domain III) on 2 adjacent RuvB subunits; this complex drives branch migration. In the full resolvosome a probable DNA-RuvA(4)-RuvB(12)-RuvC(2) complex forms which resolves the HJ.

It is found in the cytoplasm. It catalyses the reaction ATP + H2O = ADP + phosphate + H(+). Functionally, the RuvA-RuvB-RuvC complex processes Holliday junction (HJ) DNA during genetic recombination and DNA repair, while the RuvA-RuvB complex plays an important role in the rescue of blocked DNA replication forks via replication fork reversal (RFR). RuvA specifically binds to HJ cruciform DNA, conferring on it an open structure. The RuvB hexamer acts as an ATP-dependent pump, pulling dsDNA into and through the RuvAB complex. RuvB forms 2 homohexamers on either side of HJ DNA bound by 1 or 2 RuvA tetramers; 4 subunits per hexamer contact DNA at a time. Coordinated motions by a converter formed by DNA-disengaged RuvB subunits stimulates ATP hydrolysis and nucleotide exchange. Immobilization of the converter enables RuvB to convert the ATP-contained energy into a lever motion, pulling 2 nucleotides of DNA out of the RuvA tetramer per ATP hydrolyzed, thus driving DNA branch migration. The RuvB motors rotate together with the DNA substrate, which together with the progressing nucleotide cycle form the mechanistic basis for DNA recombination by continuous HJ branch migration. Branch migration allows RuvC to scan DNA until it finds its consensus sequence, where it cleaves and resolves cruciform DNA. The protein is Holliday junction branch migration complex subunit RuvB of Chlorobium chlorochromatii (strain CaD3).